The sequence spans 272 residues: Regulatory protein RecX (272 aa).

This sequence belongs to the RecX family.

It localises to the cytoplasm. In terms of biological role, modulates RecA activity. This is Regulatory protein RecX from Staphylococcus aureus (strain Newman).